A 373-amino-acid chain; its full sequence is MARNVSSWSSLSCLPDEMVLNCLARVPRRYYENISCVSVRLRSLVRTPELYRMRSLLHKDSIYVCFCDRENYSTDATYLWFTLRPTTATMEYQLVPLSFPSHNFMFRASTVAVDSEIYFVGGRPNPTELWILDTRSGKLRQGPIKPEFLRIASSSAVGVFDGKIHVIQDLKQDETEEQVYDLETQTWKVVGVPVPDEKADSRPNMVSSVSLEGKVYAKDFGSISVYNLRQGTRKEKLELPIDDRWVSCMCVANNVLFAFFTKYGLLWLDTKLNNVWRVVTGDVQTLHRKLYGSAMAEYYGKLAIFWRERYISTSINTTKNNNNNNKKKEEKIWSALIALNRVGDGICGTIEWSGVVATIPYICQFLHCLVASD.

The F-box domain maps to 8–54 (WSSLSCLPDEMVLNCLARVPRRYYENISCVSVRLRSLVRTPELYRMR). 2 Kelch repeats span residues 116-162 (EIYF…VFDG) and 163-208 (KIHV…MVSS).

This is Putative F-box/kelch-repeat protein At2g41360 from Arabidopsis thaliana (Mouse-ear cress).